The following is a 325-amino-acid chain: Apoptosis-enhancing nuclease (325 aa).

The Nucleolar localization signal motif lies at 27–35 (RKRHKRRSR). The tract at residues 53 to 105 (LSMPPEPGSSPLPTPFGAVTATEDASSGKQCPRAGSGGAPCSRRPAPGKASGP) is disordered. Pro residues predominate over residues 56-66 (PPEPGSSPLPT). An Exonuclease domain is found at 110 to 266 (CVAIDCEMVG…EDATTAMELY (157 aa)). Positions 165–188 (RQHMCKAIPFQVAQKEILKLLKGK) match the Nuclear localization signal motif. A disordered region spans residues 281 to 325 (LWTCPEDREPDSSTDMEQYMEDQYWPDDLAHGSRGGAREAQDRRN). The segment covering 308 to 325 (DLAHGSRGGAREAQDRRN) has biased composition (basic and acidic residues).

Its subcellular location is the nucleus. The protein resides in the nucleolus. Its function is as follows. Exonuclease with activity against single- and double-stranded DNA and RNA. Mediates p53-induced apoptosis. When induced by p53 following DNA damage, digests double-stranded DNA to form single-stranded DNA and amplifies DNA damage signals, leading to enhancement of apoptosis. This Pongo abelii (Sumatran orangutan) protein is Apoptosis-enhancing nuclease (AEN).